Reading from the N-terminus, the 166-residue chain is Regulatory protein RecX (166 aa).

Belongs to the RecX family.

The protein localises to the cytoplasm. Modulates RecA activity. The sequence is that of Regulatory protein RecX from Shigella sonnei (strain Ss046).